Consider the following 347-residue polypeptide: Endophilin-A3 (347 aa).

Positions 1 to 21 are membrane-binding amphipathic helix; the sequence is MSVAGLKKQFHKASQLFSEKI. The BAR domain maps to 18–249; that stretch reads SEKISGAEGT…LELRIALASQ (232 aa). Residues 60–87 are required for dimerization upon membrane association; that stretch reads PNPAYRAKLGMLNTMSKLRGQVKATGYP. Positions 180–201 form a coiled coil; the sequence is EEEIRQAVEKFEESKELAERSM. The segment at 218–254 is interaction with ARC; that stretch reads FVEAALDYHRQSTEILQELQNKLELRIALASQVPRRD. The disordered stretch occupies residues 255–284; sequence YMPKPVNTSSTNANGVEPSSSSKLTGTDIP. Polar residues predominate over residues 260–284; it reads VNTSSTNANGVEPSSSSKLTGTDIP. One can recognise an SH3 domain in the interval 285–344; that stretch reads SDQPCCRGLYDFEPENEGELGFKEGDIITLTNQIDENWYEGMLRGESGFFPINYVEVIVP.

Belongs to the endophilin family. In terms of assembly, interacts with SGIP1 and DYDC1. Interacts with FASLG. Interacts with ATXN2. Interacts with BIN2. Interacts with ARC, DNM1 and SYNJ1. Expressed at high level in testis and at lower level in brain and liver.

It is found in the cytoplasm. The protein localises to the early endosome membrane. Implicated in endocytosis. May recruit other proteins to membranes with high curvature. This chain is Endophilin-A3 (Sh3gl3), found in Rattus norvegicus (Rat).